A 92-amino-acid polypeptide reads, in one-letter code: Kinetoplastid membrane protein 11 (92 aa).

It belongs to the KMP-11 family. In terms of assembly, monomer.

Its subcellular location is the cytoplasm. The protein localises to the cytoskeleton. Its function is as follows. May be involved in the regulation of the cytoskeleton through interaction with the subpellicular microtubules. May be involved in parasite mobility and attachment to the surface of the host cell. Behaves as a strong immunogen during infection. In Trypanosoma brucei brucei, this protein is Kinetoplastid membrane protein 11 (KMP-11/1).